Consider the following 608-residue polypeptide: Glutamine--fructose-6-phosphate aminotransferase [isomerizing] (608 aa).

The Nucleophile; for GATase activity role is filled by cysteine 2. Residues 2–217 form the Glutamine amidotransferase type-2 domain; it reads CGIVGYSGKK…DKEFVVLTSE (216 aa). SIS domains follow at residues 285–424 and 453–598; these read TKEQ…NKNT and KVQK…VDKP. The active-site For Fru-6P isomerization activity is the lysine 603.

In terms of assembly, homodimer.

The protein resides in the cytoplasm. It carries out the reaction D-fructose 6-phosphate + L-glutamine = D-glucosamine 6-phosphate + L-glutamate. In terms of biological role, catalyzes the first step in hexosamine metabolism, converting fructose-6P into glucosamine-6P using glutamine as a nitrogen source. The sequence is that of Glutamine--fructose-6-phosphate aminotransferase [isomerizing] from Clostridium acetobutylicum (strain ATCC 824 / DSM 792 / JCM 1419 / IAM 19013 / LMG 5710 / NBRC 13948 / NRRL B-527 / VKM B-1787 / 2291 / W).